A 206-amino-acid chain; its full sequence is Glycerol-3-phosphate acyltransferase 1 (206 aa).

5 helical membrane-spanning segments follow: residues 14–34 (IALA…GLIL), 67–87 (ATLL…SYFL), 91–111 (AAII…WIGF), 124–144 (LLGV…AVAF), and 148–168 (YSSL…WILG).

The protein belongs to the PlsY family. In terms of assembly, probably interacts with PlsX.

Its subcellular location is the cell inner membrane. The catalysed reaction is an acyl phosphate + sn-glycerol 3-phosphate = a 1-acyl-sn-glycero-3-phosphate + phosphate. It participates in lipid metabolism; phospholipid metabolism. In terms of biological role, catalyzes the transfer of an acyl group from acyl-phosphate (acyl-PO(4)) to glycerol-3-phosphate (G3P) to form lysophosphatidic acid (LPA). This enzyme utilizes acyl-phosphate as fatty acyl donor, but not acyl-CoA or acyl-ACP. The sequence is that of Glycerol-3-phosphate acyltransferase 1 from Rhizobium johnstonii (strain DSM 114642 / LMG 32736 / 3841) (Rhizobium leguminosarum bv. viciae).